The primary structure comprises 218 residues: Protein P9 (218 aa).

Its subcellular location is the virion membrane. The sequence is that of Protein P9 (IX) from Pseudoalteromonas espejiana (Bacteriophage PM2).